The primary structure comprises 91 residues: Acylphosphatase (91 aa).

An Acylphosphatase-like domain is found at 4–91 (RYLIKVLGRV…DNEKSFKIVY (88 aa)). Catalysis depends on residues Arg19 and Asn37.

It belongs to the acylphosphatase family.

It catalyses the reaction an acyl phosphate + H2O = a carboxylate + phosphate + H(+). This is Acylphosphatase (acyP) from Clostridium acetobutylicum (strain ATCC 824 / DSM 792 / JCM 1419 / IAM 19013 / LMG 5710 / NBRC 13948 / NRRL B-527 / VKM B-1787 / 2291 / W).